Here is a 121-residue protein sequence, read N- to C-terminus: MVHMHITAWALGLILFFVAYSLYSAGRKGKGVHMGLRLMYIIIIVTGFMLYMSIVKTATGSMHMWYGLKMLTGILVIGGMEMVLVKMSKNKPTGAVWGLFIVALVAVFYLGLKLPIGWKVF.

4 helical membrane-spanning segments follow: residues 6 to 26 (ITAWALGLILFFVAYSLYSAG), 38 to 58 (LMYIIIIVTGFMLYMSIVKTA), 65 to 85 (WYGLKMLTGILVIGGMEMVLV), and 92 to 112 (PTGAVWGLFIVALVAVFYLGL).

Belongs to the UPF0344 family.

The protein localises to the cell membrane. The sequence is that of UPF0344 protein BCG9842_B4136 from Bacillus cereus (strain G9842).